Here is a 327-residue protein sequence, read N- to C-terminus: HTH-type transcriptional regulator EbgR (327 aa).

The region spanning 1 to 57 (MATLKDIAIEAGVSLATVSRVLNDDPTLNVKEETKHRILEIAEKLEYKTSSARKLQT) is the HTH lacI-type domain. The H-T-H motif DNA-binding region spans 4 to 23 (LKDIAIEAGVSLATVSRVLN).

Its function is as follows. Repressor for beta galactosidase alpha and beta subunits (ebgA and ebgC). Binds lactose as an inducer. The sequence is that of HTH-type transcriptional regulator EbgR (ebgR) from Escherichia coli (strain K12).